A 607-amino-acid polypeptide reads, in one-letter code: Polypeptide N-acetylgalactosaminyltransferase 18 (607 aa).

Topologically, residues 1 to 12 (MVCTRKTKTLVS) are cytoplasmic. Residues 13 to 35 (TCVILSGMTNIICLLYVGWVTNY) traverse the membrane as a helical; Signal-anchor for type II membrane protein segment. At 36–607 (IASVYVRGQE…ITNVLRSLAS (572 aa)) the chain is on the lumenal side. Cystine bridges form between C144–C377, C368–C447, C482–C498, C530–C543, and C571–C591. The N-linked (GlcNAc...) asparagine glycan is linked to N146. The interval 153-267 (LPEVSIVFIF…VGWAEPVLTR (115 aa)) is catalytic subdomain A. A substrate-binding site is contributed by D194. The N-linked (GlcNAc...) asparagine glycan is linked to N195. Residues D251 and H253 each coordinate Mn(2+). N320 carries an N-linked (GlcNAc...) asparagine glycan. The interval 324-385 (PIRSPALIGC…PCSRIAHIER (62 aa)) is catalytic subdomain B. H382 is a Mn(2+) binding site. Substrate-binding residues include R385 and Y390. The Ricin B-type lectin domain maps to 469–599 (AYGVLQNSLK…KCSGQHWSIT (131 aa)).

It belongs to the glycosyltransferase 2 family. GalNAc-T subfamily. Mn(2+) serves as cofactor.

The protein localises to the golgi apparatus membrane. It catalyses the reaction L-seryl-[protein] + UDP-N-acetyl-alpha-D-galactosamine = a 3-O-[N-acetyl-alpha-D-galactosaminyl]-L-seryl-[protein] + UDP + H(+). It carries out the reaction L-threonyl-[protein] + UDP-N-acetyl-alpha-D-galactosamine = a 3-O-[N-acetyl-alpha-D-galactosaminyl]-L-threonyl-[protein] + UDP + H(+). Its pathway is protein modification; protein glycosylation. In terms of biological role, catalyzes the initial reaction in O-linked oligosaccharide biosynthesis, the transfer of an N-acetyl-D-galactosamine (GalNAc) residue from UDP-GalNAc to a serine or threonine residue on the protein receptor. In Homo sapiens (Human), this protein is Polypeptide N-acetylgalactosaminyltransferase 18 (GALNT18).